The following is a 412-amino-acid chain: Imidazolonepropionase (412 aa).

2 residues coordinate Fe(3+): H76 and H78. H76 and H78 together coordinate Zn(2+). 3 residues coordinate 4-imidazolone-5-propanoate: R85, Y148, and H181. Position 148 (Y148) interacts with N-formimidoyl-L-glutamate. H242 provides a ligand contact to Fe(3+). H242 is a binding site for Zn(2+). E245 contacts 4-imidazolone-5-propanoate. D317 lines the Fe(3+) pocket. D317 serves as a coordination point for Zn(2+). N-formimidoyl-L-glutamate is bound by residues N319 and G321. Residue S322 coordinates 4-imidazolone-5-propanoate.

This sequence belongs to the metallo-dependent hydrolases superfamily. HutI family. It depends on Zn(2+) as a cofactor. Fe(3+) is required as a cofactor.

It is found in the cytoplasm. It carries out the reaction 4-imidazolone-5-propanoate + H2O = N-formimidoyl-L-glutamate. The protein operates within amino-acid degradation; L-histidine degradation into L-glutamate; N-formimidoyl-L-glutamate from L-histidine: step 3/3. Catalyzes the hydrolytic cleavage of the carbon-nitrogen bond in imidazolone-5-propanoate to yield N-formimidoyl-L-glutamate. It is the third step in the universal histidine degradation pathway. This Staphylococcus aureus (strain MSSA476) protein is Imidazolonepropionase.